The following is a 191-amino-acid chain: Lipoprotein signal peptidase (191 aa).

The next 3 membrane-spanning stretches (helical) occupy residues 26-46, 84-104, and 110-130; these read VWFP…LKAW, AVPL…YLLW, and FLTV…IDGL. Active-site residues include Asp137 and Asp163. A helical membrane pass occupies residues 156–176; it reads FPIFNIADMCVVGGTILLLVA.

The protein belongs to the peptidase A8 family.

Its subcellular location is the cell membrane. It catalyses the reaction Release of signal peptides from bacterial membrane prolipoproteins. Hydrolyzes -Xaa-Yaa-Zaa-|-(S,diacylglyceryl)Cys-, in which Xaa is hydrophobic (preferably Leu), and Yaa (Ala or Ser) and Zaa (Gly or Ala) have small, neutral side chains.. It participates in protein modification; lipoprotein biosynthesis (signal peptide cleavage). This protein specifically catalyzes the removal of signal peptides from prolipoproteins. This Deinococcus radiodurans (strain ATCC 13939 / DSM 20539 / JCM 16871 / CCUG 27074 / LMG 4051 / NBRC 15346 / NCIMB 9279 / VKM B-1422 / R1) protein is Lipoprotein signal peptidase.